We begin with the raw amino-acid sequence, 262 residues long: UPF0758 protein BTH_I0781 (262 aa).

Positions 1 to 45 (MQYEIVSAGENVGDEPERERPVAQAAAAPGIPRPAALPAAGAARR) are disordered. Positions 22-43 (VAQAAAAPGIPRPAALPAAGAA) are enriched in low complexity. The region spanning 140 to 262 (LVDSPGAVDD…TFSFAQAGWI (123 aa)) is the MPN domain. Zn(2+) is bound by residues His211, His213, and Asp224. The JAMM motif motif lies at 211-224 (HNHPSGAVRPSAAD).

It belongs to the UPF0758 family.

The polypeptide is UPF0758 protein BTH_I0781 (Burkholderia thailandensis (strain ATCC 700388 / DSM 13276 / CCUG 48851 / CIP 106301 / E264)).